A 439-amino-acid polypeptide reads, in one-letter code: Cell division protein FtsA (439 aa).

Belongs to the FtsA/MreB family. As to quaternary structure, self-interacts. Interacts with FtsZ.

The protein resides in the cell inner membrane. Cell division protein that is involved in the assembly of the Z ring. May serve as a membrane anchor for the Z ring. The sequence is that of Cell division protein FtsA from Shigella flexneri.